The primary structure comprises 380 residues: tRNA-specific 2-thiouridylase MnmA (380 aa).

ATP is bound by residues 25–32 (AMSGGVDS) and Met51. Catalysis depends on Cys119, which acts as the Nucleophile. Cys119 and Cys216 are joined by a disulfide. Gly143 is an ATP binding site. An interaction with tRNA region spans residues 166–168 (KDQ). Cys216 (cysteine persulfide intermediate) is an active-site residue. Residues 320-321 (RY) form an interaction with tRNA region.

This sequence belongs to the MnmA/TRMU family.

It localises to the cytoplasm. The enzyme catalyses S-sulfanyl-L-cysteinyl-[protein] + uridine(34) in tRNA + AH2 + ATP = 2-thiouridine(34) in tRNA + L-cysteinyl-[protein] + A + AMP + diphosphate + H(+). Catalyzes the 2-thiolation of uridine at the wobble position (U34) of tRNA, leading to the formation of s(2)U34. The sequence is that of tRNA-specific 2-thiouridylase MnmA from Deinococcus radiodurans (strain ATCC 13939 / DSM 20539 / JCM 16871 / CCUG 27074 / LMG 4051 / NBRC 15346 / NCIMB 9279 / VKM B-1422 / R1).